The primary structure comprises 298 residues: Acetylglutamate kinase (298 aa).

Substrate-binding positions include 66–67 (GG), arginine 88, and asparagine 193.

This sequence belongs to the acetylglutamate kinase family. ArgB subfamily.

Its subcellular location is the cytoplasm. It carries out the reaction N-acetyl-L-glutamate + ATP = N-acetyl-L-glutamyl 5-phosphate + ADP. It functions in the pathway amino-acid biosynthesis; L-arginine biosynthesis; N(2)-acetyl-L-ornithine from L-glutamate: step 2/4. Catalyzes the ATP-dependent phosphorylation of N-acetyl-L-glutamate. The chain is Acetylglutamate kinase from Methanosphaera stadtmanae (strain ATCC 43021 / DSM 3091 / JCM 11832 / MCB-3).